Reading from the N-terminus, the 310-residue chain is Antiviral protein II/III (310 aa).

The N-terminal stretch at 1–25 (MKMKVLEVVGLAISIWLMLTPPASS) is a signal peptide. Intrachain disulfides connect Cys57–Cys284 and Cys106–Cys123. Tyr94 is an active-site residue. Active-site residues include Tyr142, Glu197, and Arg200.

This sequence belongs to the ribosome-inactivating protein family. Type 1 RIP subfamily. As to expression, PAP-II is expressed in early summer leaves (at protein level). PAP-III is expressed in late summer leaves (at protein level).

It catalyses the reaction Endohydrolysis of the N-glycosidic bond at one specific adenosine on the 28S rRNA.. Possesses antiviral potency. Inhibits viral infection of plants (tobacco mosaic virus). Inhibits protein synthesis in both prokaryotes and eukaryotes. This is Antiviral protein II/III (PAP2) from Phytolacca americana (American pokeweed).